Reading from the N-terminus, the 448-residue chain is 4-hydroxybenzoate transporter PcaK (448 aa).

Topologically, residues 1–30 are cytoplasmic; sequence MNSPSLPAVERLDVQAFINAQPLSPYQWRI. The chain crosses the membrane as a helical span at residues 31-51; it reads VLLCFLIVFLDGLDTAAMGFI. The Periplasmic portion of the chain corresponds to 52–67; it reads APALTQDWGIDRASLG. Residues 68-88 traverse the membrane as a helical segment; sequence PVMSAALIGMVFGALGSGPLA. The Cytoplasmic portion of the chain corresponds to 89 to 94; that stretch reads DRYGRK. The helical transmembrane segment at 95-115 threads the bilayer; that stretch reads LVLVAAVFLFGLFSLASAYST. At 116–119 the chain is on the periplasmic side; it reads NVEQ. Residues 120-140 form a helical membrane-spanning segment; that stretch reads LLALRFLTGLGLGAAMPNATT. Topologically, residues 141–152 are cytoplasmic; sequence LLSEYTPERLKS. A helical membrane pass occupies residues 153 to 173; it reads LLVTSMFCGFNLGMACGGFVS. Residues 174–184 are Periplasmic-facing; that stretch reads AKLIPLFGWHS. Residues 185–205 traverse the membrane as a helical segment; it reads LLLLGGLLPLVLAVVLLFRLP. Residues 206 to 261 lie on the Cytoplasmic side of the membrane; that stretch reads ESARYLVVRNRGSERVRQVLAPIAPAQVALARSFHVPEQQTVQARNVFAVIFSGTY. Residues 262–282 traverse the membrane as a helical segment; sequence SAGTLLLWLTYFMGLVIVYLL. At 283–301 the chain is on the periplasmic side; the sequence is TSWLPTLMRDSGASLEQAA. Residues 302 to 322 form a helical membrane-spanning segment; that stretch reads FIGALFQFGGVLSAVAVGWAM. Over 323–329 the chain is Cytoplasmic; sequence DRFNPHK. The chain crosses the membrane as a helical span at residues 330 to 350; it reads VIGLFYLLAGVFAWCVGQSLG. A topological domain (periplasmic) is located at residue Gln-351. Residues 352–372 traverse the membrane as a helical segment; the sequence is VTLLATLVLLAGMCINGAQSA. Over 373–398 the chain is Cytoplasmic; sequence MPSLAARFYPTQGRATGVSWMLGIGR. Residues 399 to 419 form a helical membrane-spanning segment; the sequence is FGAILGAWIGATLLGLGWNFE. Residues 420–421 are Periplasmic-facing; that stretch reads QV. Residues 422-442 traverse the membrane as a helical segment; sequence LTALVLPAALATAAVLLKGLV. Residues 443-448 are Cytoplasmic-facing; that stretch reads SHADAG.

Belongs to the major facilitator superfamily. Aromatic acid:H(+) symporter (AAHS) (TC 2.A.1.15) family.

It is found in the cell inner membrane. Functionally, transports 4-hydroxybenzoate (4-HBA) and protocatechuate across the membrane. Driven by the proton motive force. Also functions as a chemoreceptor, which is required for chemotaxis to aromatic acids. The protein is 4-hydroxybenzoate transporter PcaK (pcaK) of Pseudomonas aeruginosa (strain ATCC 15692 / DSM 22644 / CIP 104116 / JCM 14847 / LMG 12228 / 1C / PRS 101 / PAO1).